A 99-amino-acid chain; its full sequence is Large ribosomal subunit protein bL21 (99 aa).

Belongs to the bacterial ribosomal protein bL21 family. Part of the 50S ribosomal subunit. Contacts protein L20.

This protein binds to 23S rRNA in the presence of protein L20. The polypeptide is Large ribosomal subunit protein bL21 (Mycoplasmopsis agalactiae (strain NCTC 10123 / CIP 59.7 / PG2) (Mycoplasma agalactiae)).